The following is a 347-amino-acid chain: Holliday junction branch migration complex subunit RuvB (347 aa).

The large ATPase domain (RuvB-L) stretch occupies residues 1-181 (MTRNSLLNPE…FGIPVRLQFY (181 aa)). 9 residues coordinate ATP: leucine 20, arginine 21, glycine 62, lysine 65, threonine 66, threonine 67, arginine 171, tyrosine 181, and arginine 218. Threonine 66 serves as a coordination point for Mg(2+). Positions 182–252 (SIEELRQVIT…IADEALNRLE (71 aa)) are small ATPAse domain (RuvB-S). A head domain (RuvB-H) region spans residues 255-347 (KLGLDLMDRR…SEIKNQPGLL (93 aa)). DNA-binding residues include arginine 291, arginine 310, and arginine 315.

This sequence belongs to the RuvB family. Homohexamer. Forms an RuvA(8)-RuvB(12)-Holliday junction (HJ) complex. HJ DNA is sandwiched between 2 RuvA tetramers; dsDNA enters through RuvA and exits via RuvB. An RuvB hexamer assembles on each DNA strand where it exits the tetramer. Each RuvB hexamer is contacted by two RuvA subunits (via domain III) on 2 adjacent RuvB subunits; this complex drives branch migration. In the full resolvosome a probable DNA-RuvA(4)-RuvB(12)-RuvC(2) complex forms which resolves the HJ.

It localises to the cytoplasm. The enzyme catalyses ATP + H2O = ADP + phosphate + H(+). In terms of biological role, the RuvA-RuvB-RuvC complex processes Holliday junction (HJ) DNA during genetic recombination and DNA repair, while the RuvA-RuvB complex plays an important role in the rescue of blocked DNA replication forks via replication fork reversal (RFR). RuvA specifically binds to HJ cruciform DNA, conferring on it an open structure. The RuvB hexamer acts as an ATP-dependent pump, pulling dsDNA into and through the RuvAB complex. RuvB forms 2 homohexamers on either side of HJ DNA bound by 1 or 2 RuvA tetramers; 4 subunits per hexamer contact DNA at a time. Coordinated motions by a converter formed by DNA-disengaged RuvB subunits stimulates ATP hydrolysis and nucleotide exchange. Immobilization of the converter enables RuvB to convert the ATP-contained energy into a lever motion, pulling 2 nucleotides of DNA out of the RuvA tetramer per ATP hydrolyzed, thus driving DNA branch migration. The RuvB motors rotate together with the DNA substrate, which together with the progressing nucleotide cycle form the mechanistic basis for DNA recombination by continuous HJ branch migration. Branch migration allows RuvC to scan DNA until it finds its consensus sequence, where it cleaves and resolves cruciform DNA. In Zymomonas mobilis subsp. mobilis (strain ATCC 31821 / ZM4 / CP4), this protein is Holliday junction branch migration complex subunit RuvB.